Reading from the N-terminus, the 303-residue chain is N-acetyl-D-glucosamine kinase (303 aa).

ATP contacts are provided by residues 4–11 (GFDIGGTK) and 133–140 (GVGGGLVL). Positions 157, 177, 179, and 184 each coordinate Zn(2+).

The protein belongs to the ROK (NagC/XylR) family. NagK subfamily.

It catalyses the reaction N-acetyl-D-glucosamine + ATP = N-acetyl-D-glucosamine 6-phosphate + ADP + H(+). It participates in cell wall biogenesis; peptidoglycan recycling. In terms of biological role, catalyzes the phosphorylation of N-acetyl-D-glucosamine (GlcNAc) derived from cell-wall degradation, yielding GlcNAc-6-P. The protein is N-acetyl-D-glucosamine kinase of Salmonella choleraesuis (strain SC-B67).